Consider the following 459-residue polypeptide: Ammonium transporter Rh type B (459 aa).

At 1–10 (MAESTNLRLR) the chain is on the cytoplasmic side. The helical transmembrane segment at 11–31 (LPLICIILEVILIILFGVLVE) threads the bilayer. Residues 32–58 (YNDDTDAKKWNKNNSTDPATNEFYYRY) are Extracellular-facing. A glycan (N-linked (GlcNAc...) asparagine) is linked at N45. The helical transmembrane segment at 59–79 (PSFQDVHVMIFVGFGFLMTFL) threads the bilayer. The Cytoplasmic segment spans residues 80-87 (QRYGFSSM). Residues 88 to 108 (GFNFLIAAFSLQWATLMQGFF) traverse the membrane as a helical segment. Residues 109 to 121 (HGMHHGKIHVGVT) are Extracellular-facing. Residues 122–142 (SMINADFCTGAVLISFGAVLG) form a helical membrane-spanning segment. At 143–149 (KTSPVQL) the chain is on the cytoplasmic side. Residues 150-170 (LVMAILEVTLFAVNEYILLSI) form a helical membrane-spanning segment. Residues 171-176 (LGANDA) are Extracellular-facing. A helical membrane pass occupies residues 177-197 (GGSMTIHTFGAYFGLMVTRIL). The Cytoplasmic portion of the chain corresponds to 198–216 (HRPNLDKSKHKNSSVYHSD). The chain crosses the membrane as a helical span at residues 217 to 237 (LFAMIGTIFLWMFWPSFNSAI). At 238-248 (TQYGDPQHRTA) the chain is on the extracellular side. A helical membrane pass occupies residues 249–269 (ANTYYSLAACTLATFGFSSLV). Over 270 to 274 (NPEGK) the chain is Cytoplasmic. A helical membrane pass occupies residues 275–295 (LDMVHIQNAALAGGVAVGTAG). E296 is a topological domain (extracellular). A helical transmembrane segment spans residues 297-317 (MMLTPFGSMIVGFLAGTISVL). The Cytoplasmic segment spans residues 318-340 (GYKYLTPFMESKLKIQDTCGIHN). A helical membrane pass occupies residues 341-361 (LHGMPGILGAIVGAVTAALAS). Over 362–392 (RDVYGNGLDKVFLEAADNSQWSAQTKGGFQA) the chain is Extracellular. A helical membrane pass occupies residues 393 to 413 (ISLAVTLGIALIGGLITGFLL). Over 414–459 (KLPIYGTPPDTQCFEDAVYWEVPGEEEDHHELNEVSTQNEVEKLNS) the chain is Cytoplasmic. Residues 440–459 (EDHHELNEVSTQNEVEKLNS) form a disordered region.

This sequence belongs to the ammonium transporter (TC 2.A.49) family. Rh subfamily.

The protein resides in the basolateral cell membrane. It localises to the cytoplasmic vesicle membrane. Functionally, functions as an ammonia transporter. May play a role in the elimination of ammonia in the gill. The protein is Ammonium transporter Rh type B (rhbg) of Danio rerio (Zebrafish).